The following is a 387-amino-acid chain: 23S rRNA (uracil(747)-C(5))-methyltransferase RlmC (387 aa).

[4Fe-4S] cluster is bound by residues Cys3, Cys11, Cys14, and Cys86. S-adenosyl-L-methionine is bound by residues Gln211, Phe240, Glu269, and Asn319. Cys346 functions as the Nucleophile in the catalytic mechanism.

It belongs to the class I-like SAM-binding methyltransferase superfamily. RNA M5U methyltransferase family. RlmC subfamily.

It catalyses the reaction uridine(747) in 23S rRNA + S-adenosyl-L-methionine = 5-methyluridine(747) in 23S rRNA + S-adenosyl-L-homocysteine + H(+). In terms of biological role, catalyzes the formation of 5-methyl-uridine at position 747 (m5U747) in 23S rRNA. The chain is 23S rRNA (uracil(747)-C(5))-methyltransferase RlmC from Pasteurella multocida (strain Pm70).